The following is a 120-amino-acid chain: Holo-[acyl-carrier-protein] synthase (120 aa).

Mg(2+)-binding residues include D8 and E60.

It belongs to the P-Pant transferase superfamily. AcpS family. Requires Mg(2+) as cofactor.

The protein resides in the cytoplasm. The catalysed reaction is apo-[ACP] + CoA = holo-[ACP] + adenosine 3',5'-bisphosphate + H(+). In terms of biological role, transfers the 4'-phosphopantetheine moiety from coenzyme A to a Ser of acyl-carrier-protein. This chain is Holo-[acyl-carrier-protein] synthase, found in Anaplasma marginale (strain St. Maries).